A 207-amino-acid polypeptide reads, in one-letter code: Large ribosomal subunit protein uL4 (207 aa).

A disordered region spans residues 44–78; it reads MRQGTHKTKNRAEVSGGGRKPWRQKGTGRARQGSI.

This sequence belongs to the universal ribosomal protein uL4 family. As to quaternary structure, part of the 50S ribosomal subunit.

One of the primary rRNA binding proteins, this protein initially binds near the 5'-end of the 23S rRNA. It is important during the early stages of 50S assembly. It makes multiple contacts with different domains of the 23S rRNA in the assembled 50S subunit and ribosome. Functionally, this protein when expressed in E.coli represses the endogenous S10 operon; this may not occur in B.stearothermophilus however. Its function is as follows. Forms part of the polypeptide exit tunnel. This chain is Large ribosomal subunit protein uL4 (rplD), found in Geobacillus stearothermophilus (Bacillus stearothermophilus).